Here is a 318-residue protein sequence, read N- to C-terminus: Bis(5'-nucleosyl)-tetraphosphatase, symmetrical (318 aa).

The disordered stretch occupies residues 269-318 (PGREVTGPAPVARAPRRPRERLGRQRSRGNRGNAGNTAVPAKPQVDTPQD). Residues 282-297 (APRRPRERLGRQRSRG) are compositionally biased toward basic residues.

This sequence belongs to the Ap4A hydrolase family.

The enzyme catalyses P(1),P(4)-bis(5'-adenosyl) tetraphosphate + H2O = 2 ADP + 2 H(+). Its function is as follows. Hydrolyzes diadenosine 5',5'''-P1,P4-tetraphosphate to yield ADP. This is Bis(5'-nucleosyl)-tetraphosphatase, symmetrical from Xanthomonas oryzae pv. oryzae (strain KACC10331 / KXO85).